The following is a 70-amino-acid chain: Small ribosomal subunit protein bS21 (70 aa).

The protein belongs to the bacterial ribosomal protein bS21 family.

This is Small ribosomal subunit protein bS21 from Campylobacter jejuni subsp. jejuni serotype O:23/36 (strain 81-176).